Consider the following 213-residue polypeptide: Pyrrolidone-carboxylate peptidase (213 aa).

Active-site residues include glutamate 78, cysteine 141, and histidine 165.

This sequence belongs to the peptidase C15 family. As to quaternary structure, homotetramer.

Its subcellular location is the cytoplasm. The enzyme catalyses Release of an N-terminal pyroglutamyl group from a polypeptide, the second amino acid generally not being Pro.. In terms of biological role, removes 5-oxoproline from various penultimate amino acid residues except L-proline. The polypeptide is Pyrrolidone-carboxylate peptidase (Staphylococcus carnosus (strain TM300)).